The following is a 619-amino-acid chain: Interferon-activable protein 204 (619 aa).

Positions 1–88 (MVNEYKRIVL…AEILKKERSE (88 aa)) constitute a Pyrin domain. The Nuclear export signal motif lies at 24–35 (LFKSLLARDLNL). The span at 86 to 99 (RSEVTGETSLEKNG) shows a compositional bias: basic and acidic residues. Residues 86–223 (RSEVTGETSL…QNQNIPRGAV (138 aa)) are disordered. The segment covering 122-153 (TSATQEETSTAQAGTSTAQARTSTAQAGTSTA) has biased composition (low complexity). 3 consecutive repeat copies span residues 134–140 (AGTSTAQ), 141–147 (ARTSTAQ), and 148–154 (AGTSTAQ). Residues 134–154 (AGTSTAQARTSTAQAGTSTAQ) are 3 X 7 AA tandem repeats of A-[GR]-T-S-T-A-Q. Residues 150-157 (TSTAQKRK) carry the Nuclear localization signal motif. The span at 159 to 176 (MREEETGVKKSKAAKEPD) shows a compositional bias: basic and acidic residues. Low complexity predominate over residues 190–206 (SPILHSSSSASSNIPSA). The segment covering 207–218 (KNQKSQPQNQNI) has biased composition (polar residues). 2 HIN-200 domains span residues 213 to 413 (PQNQ…IKIS) and 417 to 615 (NVPK…MQVI). An interaction with ID2 region spans residues 550–614 (KKTERNKFIY…RSVRHSYMQV (65 aa)).

Belongs to the HIN-200 family. Interacts with UBTF. Interacts with RUNX2. Interacts with ID1, ID2 and ID3. Interacts with STING. In terms of processing, acetylated upon bacterial infection, leading to translocation from nucleus to cytoplasm and subsequent recruitment of STING to activate IFN-beta production. In terms of tissue distribution, present in osteoblasts (at protein level).

Its subcellular location is the nucleus. The protein resides in the nucleolus. It localises to the cytoplasm. Interferon-stimulated protein that plays a role in several biological processes including cell differentiation, autophagy and innate immunity. Cooperates with CGAS to sense dsDNA and activates the STING-dependent type I IFN pathway. Mechanistically, gets acetylated upon bacterial infection and then translocates from nucleus into cytoplasm to recruit STING for activation of TBK1-dependent IRF3 nuclear translocation and IFN-beta release. Inhibits the transcription of ribosomal RNA. May inhibit DNA binding by UBTF. Inhibits cell growth via p53/TP53 and RB1-dependent and independent pathways. Acts as a coactivator of RUNX2 during osteogenesis. May be involved in macrophage differentiation. Enables skeletal muscle and cardiac myocyte differentiation by sequestring Id proteins in the cytosol and promoting their ubiquitination and subsequent degradation. The chain is Interferon-activable protein 204 (Ifi204) from Mus musculus (Mouse).